Consider the following 212-residue polypeptide: Thymidylate kinase (212 aa).

A2 carries the post-translational modification N-acetylalanine. Residues 16–21 (RAGKST) and R97 contribute to the ATP site. The interval 133–157 (LQLQLADAAKRGAFGHERYENGAFQ) is LID. An N6-acetyllysine modification is found at K169. K182 and R192 together coordinate ATP.

It belongs to the thymidylate kinase family. Homodimer. It depends on Mg(2+) as a cofactor.

It carries out the reaction dTMP + ATP = dTDP + ADP. It participates in pyrimidine metabolism; dTTP biosynthesis. In terms of biological role, catalyzes the phosphorylation of thymidine monophosphate (dTMP) to thymidine diphosphate (dTDP), the immediate precursor for the DNA building block dTTP, with ATP as the preferred phosphoryl donor in the presence of Mg(2+). The polypeptide is Thymidylate kinase (DTYMK) (Homo sapiens (Human)).